Here is a 319-residue protein sequence, read N- to C-terminus: Acetyl-coenzyme A carboxylase carboxyl transferase subunit alpha (319 aa).

The 262-residue stretch at 35–296 (DLDKEIEQLE…KDMLVKQLEE (262 aa)) folds into the CoA carboxyltransferase C-terminal domain.

It belongs to the AccA family. In terms of assembly, acetyl-CoA carboxylase is a heterohexamer composed of biotin carboxyl carrier protein (AccB), biotin carboxylase (AccC) and two subunits each of ACCase subunit alpha (AccA) and ACCase subunit beta (AccD).

The protein localises to the cytoplasm. The catalysed reaction is N(6)-carboxybiotinyl-L-lysyl-[protein] + acetyl-CoA = N(6)-biotinyl-L-lysyl-[protein] + malonyl-CoA. It functions in the pathway lipid metabolism; malonyl-CoA biosynthesis; malonyl-CoA from acetyl-CoA: step 1/1. Functionally, component of the acetyl coenzyme A carboxylase (ACC) complex. First, biotin carboxylase catalyzes the carboxylation of biotin on its carrier protein (BCCP) and then the CO(2) group is transferred by the carboxyltransferase to acetyl-CoA to form malonyl-CoA. This is Acetyl-coenzyme A carboxylase carboxyl transferase subunit alpha from Vibrio atlanticus (strain LGP32) (Vibrio splendidus (strain Mel32)).